Reading from the N-terminus, the 691-residue chain is Elongation factor G (691 aa).

The region spanning Glu-8 to Ile-282 is the tr-type G domain. Residues Ala-17 to Thr-24, Asp-81 to His-85, and Asn-135 to Asp-138 each bind GTP.

The protein belongs to the TRAFAC class translation factor GTPase superfamily. Classic translation factor GTPase family. EF-G/EF-2 subfamily.

The protein localises to the cytoplasm. Functionally, catalyzes the GTP-dependent ribosomal translocation step during translation elongation. During this step, the ribosome changes from the pre-translocational (PRE) to the post-translocational (POST) state as the newly formed A-site-bound peptidyl-tRNA and P-site-bound deacylated tRNA move to the P and E sites, respectively. Catalyzes the coordinated movement of the two tRNA molecules, the mRNA and conformational changes in the ribosome. This chain is Elongation factor G, found in Thermosynechococcus vestitus (strain NIES-2133 / IAM M-273 / BP-1).